The chain runs to 60 residues: MAKKGNRIQVILECTEHKATGLAGTSRHITTKNRKNTPERIELKKYNSVLKKYTIHKEIK.

Belongs to the bacterial ribosomal protein bL33 family.

The sequence is that of Large ribosomal subunit protein bL33 from Cytophaga hutchinsonii (strain ATCC 33406 / DSM 1761 / CIP 103989 / NBRC 15051 / NCIMB 9469 / D465).